Consider the following 122-residue polypeptide: Acidic phospholipase A2 (122 aa).

7 cysteine pairs are disulfide-bonded: C26–C115, C28–C44, C43–C95, C49–C122, C50–C88, C57–C81, and C75–C86. Residues Y27, G29, and G31 each coordinate Ca(2+). The active site involves H47. D48 contacts Ca(2+). Residue D89 is part of the active site.

The cofactor is Ca(2+). Expressed by the venom gland.

It localises to the secreted. It catalyses the reaction a 1,2-diacyl-sn-glycero-3-phosphocholine + H2O = a 1-acyl-sn-glycero-3-phosphocholine + a fatty acid + H(+). Its function is as follows. PLA2 catalyzes the calcium-dependent hydrolysis of the 2-acyl groups in 3-sn-phosphoglycerides. The chain is Acidic phospholipase A2 from Lachesis stenophrys (Central American bushmaster).